We begin with the raw amino-acid sequence, 561 residues long: PR domain zinc finger protein 14 (561 aa).

A disordered region spans residues 1 to 20 (MALPPSGETQSQDKANYLPQ). Residues 7–20 (GETQSQDKANYLPQ) show a composition bias toward polar residues. An interaction with CBFA2T2 region spans residues 184–373 (GFNFTEEELS…GVPMNLRVTE (190 aa)). The 116-residue stretch at 241 to 356 (EGLCLMQTSF…RNQELLVWYG (116 aa)) folds into the SET domain. Residue Tyr-355 coordinates S-adenosyl-L-methionine. The C2H2-type 1; atypical zinc finger occupies 390–416 (YRCERCGKVFTYKYYRDKHLKYTPCVD). 5 C2H2-type zinc fingers span residues 422 to 445 (FPCS…LHVH), 451 to 473 (YLCS…MRVH), 479 to 501 (YQCV…IRQH), 507 to 530 (FKCK…RRSH), and 536 to 558 (SSCD…MRLH).

This sequence belongs to the class V-like SAM-binding methyltransferase superfamily. In terms of assembly, interacts with CBFA2T2. As to expression, restricted to embryonic stem cells and primordial germ cells. Not detected in epiblast-derived stem cells.

Its subcellular location is the nucleus. In terms of biological role, transcription factor that has both positive and negative roles on transcription. Plays a role in cellular pluripotency. Essential for germ cell development at 2 levels: the reacquisition of potential pluripotency, including SOX2 up-regulation, and successful epigenetic reprogramming, characterized by EHMT1 repression. Its association with CBFA2T2 is required for the functions in pluripotency and germ cell formation. This chain is PR domain zinc finger protein 14 (Prdm14), found in Mus musculus (Mouse).